Reading from the N-terminus, the 245-residue chain is 3-dehydroquinate dehydratase (245 aa).

3-dehydroquinate contacts are provided by residues 35–37 (EFR) and Arg70. His132 serves as the catalytic Proton donor/acceptor. Lys158 acts as the Schiff-base intermediate with substrate in catalysis. The 3-dehydroquinate site is built by Arg199, Thr220, and Gln224.

This sequence belongs to the type-I 3-dehydroquinase family. Homodimer.

The catalysed reaction is 3-dehydroquinate = 3-dehydroshikimate + H2O. The protein operates within metabolic intermediate biosynthesis; chorismate biosynthesis; chorismate from D-erythrose 4-phosphate and phosphoenolpyruvate: step 3/7. In terms of biological role, involved in the third step of the chorismate pathway, which leads to the biosynthesis of aromatic amino acids. Catalyzes the cis-dehydration of 3-dehydroquinate (DHQ) and introduces the first double bond of the aromatic ring to yield 3-dehydroshikimate. This is 3-dehydroquinate dehydratase from Haloquadratum walsbyi (strain DSM 16790 / HBSQ001).